A 271-amino-acid polypeptide reads, in one-letter code: Formamidopyrimidine-DNA glycosylase (271 aa).

Catalysis depends on Pro2, which acts as the Schiff-base intermediate with DNA. Glu3 functions as the Proton donor in the catalytic mechanism. Lys58 (proton donor; for beta-elimination activity) is an active-site residue. His91, Arg110, and Arg152 together coordinate DNA. The FPG-type zinc-finger motif lies at 237–271 (WVYGRAGQSCRQCGELVSKTRQGQRSTFFCARCQH). Residue Arg261 is the Proton donor; for delta-elimination activity of the active site.

This sequence belongs to the FPG family. As to quaternary structure, monomer. Zn(2+) serves as cofactor.

It carries out the reaction Hydrolysis of DNA containing ring-opened 7-methylguanine residues, releasing 2,6-diamino-4-hydroxy-5-(N-methyl)formamidopyrimidine.. The enzyme catalyses 2'-deoxyribonucleotide-(2'-deoxyribose 5'-phosphate)-2'-deoxyribonucleotide-DNA = a 3'-end 2'-deoxyribonucleotide-(2,3-dehydro-2,3-deoxyribose 5'-phosphate)-DNA + a 5'-end 5'-phospho-2'-deoxyribonucleoside-DNA + H(+). Involved in base excision repair of DNA damaged by oxidation or by mutagenic agents. Acts as a DNA glycosylase that recognizes and removes damaged bases. Has a preference for oxidized purines, such as 7,8-dihydro-8-oxoguanine (8-oxoG). Has AP (apurinic/apyrimidinic) lyase activity and introduces nicks in the DNA strand. Cleaves the DNA backbone by beta-delta elimination to generate a single-strand break at the site of the removed base with both 3'- and 5'-phosphates. The chain is Formamidopyrimidine-DNA glycosylase from Nitrosomonas europaea (strain ATCC 19718 / CIP 103999 / KCTC 2705 / NBRC 14298).